Reading from the N-terminus, the 723-residue chain is Envelope glycoprotein H (723 aa).

The N-terminal stretch at 1-23 (MSPATRFTVISCLVVSLITPSET) is a signal peptide. Topologically, residues 24-700 (SSWFDPFIEW…IIDIRQTSIF (677 aa)) are virion surface. N-linked (GlcNAc...) asparagine; by host glycosylation is found at Asn39, Asn45, Asn144, and Asn174. Positions 197–263 (HQFAIVLTFT…QSYRDDLLIV (67 aa)) are interaction with gL. Residues Asn270, Asn340, Asn411, Asn543, Asn621, and Asn681 are each glycosylated (N-linked (GlcNAc...) asparagine; by host). A helical transmembrane segment spans residues 701–721 (MIMLYCSLGVLLLYGLYRLLH). Residues 722–723 (MI) lie on the Intravirion side of the membrane.

Belongs to the herpesviridae glycoprotein H family. In terms of assembly, interacts with glycoprotein L (gL); this interaction is necessary for the correct processing and cell surface expression of gH. The heterodimer gH/gL seems to interact with gB trimers during fusion. N-glycosylated, O-glycosylated, and sialylated.

It is found in the virion membrane. The protein resides in the host cell membrane. It localises to the host endosome membrane. In terms of biological role, the heterodimer glycoprotein H-glycoprotein L is required for the fusion of viral and plasma membranes leading to virus entry into the host cell. Following initial binding to host receptor, membrane fusion is mediated by the fusion machinery composed of gB and the heterodimer gH/gL. May also be involved in the fusion between the virion envelope and the outer nuclear membrane during virion morphogenesis. The protein is Envelope glycoprotein H of Guinea pig cytomegalovirus (strain 22122) (GPCMV).